Here is a 463-residue protein sequence, read N- to C-terminus: L-seryl-tRNA(Sec) selenium transferase (463 aa).

The residue at position 295 (Lys295) is an N6-(pyridoxal phosphate)lysine.

Belongs to the SelA family. As to quaternary structure, homodecamer; pentamer of dimers. Binds only one seryl-tRNA(Sec) per dimer. Pyridoxal 5'-phosphate serves as cofactor.

The protein localises to the cytoplasm. The catalysed reaction is L-seryl-tRNA(Sec) + selenophosphate + H(+) = L-selenocysteinyl-tRNA(Sec) + phosphate. It functions in the pathway aminoacyl-tRNA biosynthesis; selenocysteinyl-tRNA(Sec) biosynthesis; selenocysteinyl-tRNA(Sec) from L-seryl-tRNA(Sec) (bacterial route): step 1/1. Its function is as follows. Converts seryl-tRNA(Sec) to selenocysteinyl-tRNA(Sec) required for selenoprotein biosynthesis. This is L-seryl-tRNA(Sec) selenium transferase from Escherichia coli O127:H6 (strain E2348/69 / EPEC).